Here is a 966-residue protein sequence, read N- to C-terminus: Valine--tRNA ligase (966 aa).

The short motif at 48-58 (PNITGGLHLGH) is the 'HIGH' region element. Residues 348–368 (DYKDARKKIIEECKRLKILED) are a coiled coil. The 'KMSKS' region signature appears at 566–570 (KMSKS). Lys569 is an ATP binding site. The stretch at 939–960 (FKKSQEKLNHYNKTKNKLLNQY) forms a coiled coil.

This sequence belongs to the class-I aminoacyl-tRNA synthetase family. ValS type 1 subfamily. In terms of assembly, monomer.

It localises to the cytoplasm. The catalysed reaction is tRNA(Val) + L-valine + ATP = L-valyl-tRNA(Val) + AMP + diphosphate. Functionally, catalyzes the attachment of valine to tRNA(Val). As ValRS can inadvertently accommodate and process structurally similar amino acids such as threonine, to avoid such errors, it has a 'posttransfer' editing activity that hydrolyzes mischarged Thr-tRNA(Val) in a tRNA-dependent manner. The protein is Valine--tRNA ligase of Blochmanniella floridana.